Reading from the N-terminus, the 335-residue chain is GTPase Obg (335 aa).

The Obg domain occupies 1–158 (MFLDQITIEL…RQVELELKLI (158 aa)). The OBG-type G domain maps to 159–334 (ADIGLVGFPN…LNSLFTNKLA (176 aa)). GTP-binding positions include 165 to 172 (GFPNAGKS), 190 to 194 (FTTLQ), 215 to 218 (DIPG), 285 to 288 (NKID), and 315 to 317 (SGL). The Mg(2+) site is built by Ser-172 and Thr-192.

The protein belongs to the TRAFAC class OBG-HflX-like GTPase superfamily. OBG GTPase family. As to quaternary structure, monomer. Mg(2+) serves as cofactor.

The protein resides in the cytoplasm. In terms of biological role, an essential GTPase (4.1 pmol GTP/min). Cannot substitute endogenous obg in E.coli, has a partially dominant-negative phenotype upon overexpression in liquid culture leading to decreased growth rate in a concentration-dependent fashion, with 50% of cells being elongated. Binds GTP, GDP and possibly (p)ppGpp with moderate affinity, with high nucleotide exchange rates and a fairly low GTP hydrolysis rate. It may play a role in control of the cell cycle, stress response, ribosome biogenesis and in those bacteria that undergo differentiation, in morphogenesis control. In Chlamydia abortus (strain DSM 27085 / S26/3) (Chlamydophila abortus), this protein is GTPase Obg.